The chain runs to 401 residues: Acetate kinase (401 aa).

Asn9 is a Mg(2+) binding site. Lys16 lines the ATP pocket. Residue Arg88 coordinates substrate. Asp147 serves as the catalytic Proton donor/acceptor. Residues His207 to Gly211, Asp282 to Arg284, and Gly333 to Asn337 each bind ATP. Mg(2+) is bound at residue Glu388.

It belongs to the acetokinase family. As to quaternary structure, homodimer. Mg(2+) serves as cofactor. It depends on Mn(2+) as a cofactor.

It is found in the cytoplasm. It catalyses the reaction acetate + ATP = acetyl phosphate + ADP. It participates in metabolic intermediate biosynthesis; acetyl-CoA biosynthesis; acetyl-CoA from acetate: step 1/2. Functionally, catalyzes the formation of acetyl phosphate from acetate and ATP. Can also catalyze the reverse reaction. The chain is Acetate kinase from Haemophilus influenzae (strain ATCC 51907 / DSM 11121 / KW20 / Rd).